Reading from the N-terminus, the 542-residue chain is Cytochrome P450 734A6 (542 aa).

Residues 2–22 form a helical membrane-spanning segment; that stretch reads GWWGWAAAAAAAAAWVAVKVL. Cys-474 provides a ligand contact to heme.

This sequence belongs to the cytochrome P450 family. Heme is required as a cofactor. Highly expressed in leaf sheaths. Expressed in roots, shoot apex, leaf blades, internodes and panicles.

The protein resides in the membrane. Cytochrome P450 involved in brassinosteroids (BRs) inactivation and regulation of BRs homeostasis. Is a multifunctional and multisubstrate enzyme that controls the endogenous bioactive BR content both by direct inactivation of castasterone (CS) and by decreasing the levels of BR precursors. Catalyzes the oxidation of carbon 22 hydroxylated BR intermediates to produce C26 oxidized metabolites. The sequence is that of Cytochrome P450 734A6 (CYP734A6) from Oryza sativa subsp. japonica (Rice).